We begin with the raw amino-acid sequence, 171 residues long: 3-hydroxydecanoyl-[acyl-carrier-protein] dehydratase (171 aa).

The active site involves H70.

Belongs to the thioester dehydratase family. FabA subfamily. Homodimer.

The protein localises to the cytoplasm. The catalysed reaction is a (3R)-hydroxyacyl-[ACP] = a (2E)-enoyl-[ACP] + H2O. It carries out the reaction (3R)-hydroxydecanoyl-[ACP] = (2E)-decenoyl-[ACP] + H2O. The enzyme catalyses (2E)-decenoyl-[ACP] = (3Z)-decenoyl-[ACP]. It participates in lipid metabolism; fatty acid biosynthesis. Its function is as follows. Necessary for the introduction of cis unsaturation into fatty acids. Catalyzes the dehydration of (3R)-3-hydroxydecanoyl-ACP to E-(2)-decenoyl-ACP and then its isomerization to Z-(3)-decenoyl-ACP. Can catalyze the dehydratase reaction for beta-hydroxyacyl-ACPs with saturated chain lengths up to 16:0, being most active on intermediate chain length. The protein is 3-hydroxydecanoyl-[acyl-carrier-protein] dehydratase of Shewanella denitrificans (strain OS217 / ATCC BAA-1090 / DSM 15013).